A 998-amino-acid polypeptide reads, in one-letter code: DNA damage-induced apoptosis suppressor protein (998 aa).

The disordered stretch occupies residues 815–834 (DKQQASPSCPKNIKTPSQKI). Over residues 817 to 834 (QQASPSCPKNIKTPSQKI) the composition is skewed to polar residues.

In terms of tissue distribution, highly expressed in colorectal and lung cancer tissues.

The protein localises to the cytoplasm. It localises to the nucleus. May be an anti-apoptotic protein involved in DNA repair or cell survival. The chain is DNA damage-induced apoptosis suppressor protein (DDIAS) from Homo sapiens (Human).